Reading from the N-terminus, the 443-residue chain is Omega-6 fatty acid desaturase, chloroplastic (443 aa).

Residues 1–64 (MASRIADSLF…AKKRIGCIKA (64 aa)) constitute a chloroplast transit peptide. Positions 166–170 (HDCAH) match the Histidine box-1 motif. Positions 202–206 (HDRHH) match the Histidine box-2 motif. Positions 362 to 366 (HIPHH) match the Histidine box-3 motif.

Belongs to the fatty acid desaturase type 1 family.

It is found in the plastid. The protein localises to the chloroplast membrane. It carries out the reaction a (9Z)-octadecenoyl-containing glycerolipid + 2 reduced [2Fe-2S]-[ferredoxin] + O2 + 2 H(+) = a (9Z,12Z)-octadecadienoyl-containing glycerolipid + 2 oxidized [2Fe-2S]-[ferredoxin] + 2 H2O. It functions in the pathway lipid metabolism; polyunsaturated fatty acid biosynthesis. Chloroplast omega-6 fatty acid desaturase introduces the second double bond in the biosynthesis of 16:3 and 18:3 fatty acids, important constituents of plant membranes. It is thought to use ferredoxin as an electron donor and to act on fatty acids esterified to galactolipids, sulfolipids and phosphatidylglycerol. The polypeptide is Omega-6 fatty acid desaturase, chloroplastic (Brassica napus (Rape)).